Reading from the N-terminus, the 542-residue chain is CTP synthase (542 aa).

The tract at residues 1-265 is amidoligase domain; it reads MARYVFITGG…DNEVLAAFGI (265 aa). A CTP-binding site is contributed by S13. S13 lines the UTP pocket. Residues 14–19 and D71 each bind ATP; that span reads SLGKGI. The Mg(2+) site is built by D71 and E139. CTP-binding positions include 146-148, 186-191, and K222; these read DIE and KTKPTQ. UTP-binding positions include 186-191 and K222; that span reads KTKPTQ. The Glutamine amidotransferase type-1 domain maps to 291 to 541; sequence TIAIVGKYTG…IEAALEQSRL (251 aa). G353 is a binding site for L-glutamine. Catalysis depends on C380, which acts as the Nucleophile; for glutamine hydrolysis. L-glutamine is bound by residues 381-384, E404, and R469; that span reads FGMQ. Active-site residues include H514 and E516.

The protein belongs to the CTP synthase family. Homotetramer.

The enzyme catalyses UTP + L-glutamine + ATP + H2O = CTP + L-glutamate + ADP + phosphate + 2 H(+). The catalysed reaction is L-glutamine + H2O = L-glutamate + NH4(+). It carries out the reaction UTP + NH4(+) + ATP = CTP + ADP + phosphate + 2 H(+). The protein operates within pyrimidine metabolism; CTP biosynthesis via de novo pathway; CTP from UDP: step 2/2. With respect to regulation, allosterically activated by GTP, when glutamine is the substrate; GTP has no effect on the reaction when ammonia is the substrate. The allosteric effector GTP functions by stabilizing the protein conformation that binds the tetrahedral intermediate(s) formed during glutamine hydrolysis. Inhibited by the product CTP, via allosteric rather than competitive inhibition. In terms of biological role, catalyzes the ATP-dependent amination of UTP to CTP with either L-glutamine or ammonia as the source of nitrogen. Regulates intracellular CTP levels through interactions with the four ribonucleotide triphosphates. This chain is CTP synthase, found in Rhizobium meliloti (strain 1021) (Ensifer meliloti).